A 147-amino-acid polypeptide reads, in one-letter code: UPF0178 protein VP2328 (147 aa).

The protein belongs to the UPF0178 family.

This Vibrio parahaemolyticus serotype O3:K6 (strain RIMD 2210633) protein is UPF0178 protein VP2328.